Reading from the N-terminus, the 160-residue chain is Ribosome maturation factor RimP (160 aa).

Belongs to the RimP family.

It localises to the cytoplasm. Required for maturation of 30S ribosomal subunits. The sequence is that of Ribosome maturation factor RimP from Symbiobacterium thermophilum (strain DSM 24528 / JCM 14929 / IAM 14863 / T).